A 208-amino-acid chain; its full sequence is Small ribosomal subunit protein eS1 (208 aa).

The protein belongs to the eukaryotic ribosomal protein eS1 family.

This is Small ribosomal subunit protein eS1 from Saccharolobus islandicus (strain Y.N.15.51 / Yellowstone #2) (Sulfolobus islandicus).